Here is a 170-residue protein sequence, read N- to C-terminus: Ureidoglycolate lyase (170 aa).

It belongs to the ureidoglycolate lyase family. As to quaternary structure, homodimer. Ni(2+) serves as cofactor.

The enzyme catalyses (S)-ureidoglycolate = urea + glyoxylate. It participates in nitrogen metabolism; (S)-allantoin degradation. In terms of biological role, catalyzes the catabolism of the allantoin degradation intermediate (S)-ureidoglycolate, generating urea and glyoxylate. Involved in the utilization of allantoin as nitrogen source. This Burkholderia mallei (strain NCTC 10247) protein is Ureidoglycolate lyase.